Here is a 1828-residue protein sequence, read N- to C-terminus: Chromodomain-helicase-DNA-binding protein 2 (1828 aa).

Over residues Met1–Ser14 the composition is skewed to basic and acidic residues. The interval Met1–Asp243 is disordered. The segment covering Leu15–Ser75 has biased composition (low complexity). 3 stretches are compositionally biased toward basic and acidic residues: residues Glu81 to Glu101, Ser115 to Ala128, and Lys146 to Pro155. Over residues Val175 to Lys204 the composition is skewed to basic residues. Residues Ser207 and Ser208 each carry the phosphoserine modification. A compositionally biased stretch (acidic residues) spans Glu234–Asp243. A Phosphothreonine modification is found at Thr240. At Ser242 the chain carries Phosphoserine. Chromo domains are found at residues Glu261–Gly353 and Gln378–Arg456. Residues Ala496–Glu666 enclose the Helicase ATP-binding domain. Residue Asp509–Thr516 participates in ATP binding. The short motif at Asp617 to His620 is the DEAH box element. The region spanning Leu795–Thr946 is the Helicase C-terminal domain. Disordered regions lie at residues Glu1030–Arg1124, Val1331–Asp1462, His1556–Gly1638, and His1680–Thr1828. The span at Glu1037–Glu1065 shows a compositional bias: basic and acidic residues. A phosphoserine mark is found at Ser1085, Ser1087, Ser1365, and Ser1386. Over residues Lys1347–Asn1371 the composition is skewed to basic and acidic residues. 2 stretches are compositionally biased toward basic and acidic residues: residues Glu1396–Asp1431 and Glu1565–Gly1574. The tract at residues Leu1464–Gln1566 is CHD1 helical C-terminal domain (CHCT). Over residues Ser1584–Leu1601 the composition is skewed to polar residues. 4 stretches are compositionally biased toward basic and acidic residues: residues Arg1698 to His1720, Gln1739 to Pro1749, Asp1760 to Glu1772, and Ser1795 to Glu1814. At Ser1807 the chain carries Phosphoserine.

This sequence belongs to the SNF2/RAD54 helicase family. In terms of assembly, interacts with MYOD1. Interacts with histone H3.3.

Its subcellular location is the nucleus. The catalysed reaction is ATP + H2O = ADP + phosphate + H(+). Functionally, ATP-dependent chromatin-remodeling factor that specifically binds to the promoter of target genes, leading to chromatin remodeling, possibly by promoting deposition of histone H3.3. Involved in myogenesis via interaction with MYOD1: binds to myogenic gene regulatory sequences and mediates incorporation of histone H3.3 prior to the onset of myogenic gene expression, promoting their expression. The chain is Chromodomain-helicase-DNA-binding protein 2 (CHD2) from Homo sapiens (Human).